A 596-amino-acid chain; its full sequence is Elongation factor 4 (596 aa).

The tr-type G domain maps to lysine 2–glutamate 184. GTP contacts are provided by residues aspartate 14 to threonine 19 and asparagine 131 to aspartate 134.

The protein belongs to the TRAFAC class translation factor GTPase superfamily. Classic translation factor GTPase family. LepA subfamily.

The protein localises to the cell inner membrane. The enzyme catalyses GTP + H2O = GDP + phosphate + H(+). In terms of biological role, required for accurate and efficient protein synthesis under certain stress conditions. May act as a fidelity factor of the translation reaction, by catalyzing a one-codon backward translocation of tRNAs on improperly translocated ribosomes. Back-translocation proceeds from a post-translocation (POST) complex to a pre-translocation (PRE) complex, thus giving elongation factor G a second chance to translocate the tRNAs correctly. Binds to ribosomes in a GTP-dependent manner. The protein is Elongation factor 4 of Shewanella baltica (strain OS155 / ATCC BAA-1091).